A 387-amino-acid polypeptide reads, in one-letter code: MKKVSVLGSTGSVGKKTVDLLSKRKEEYQVEALSAHSNFALLAHQAKLLNAKYVAISDERLYKDLKESLLGTDVKIAIGATNIATIPVDLSVVAIVGIAGLGPVMEVIESGTKVIALANKESIVCGGKLLLKKAKEKNVQIIPIDSEHNAIFQILQNDDKCVEKIILTASGGPFLNYSLEQLRNVMVDKALSHPTWNMGKKISVDSATMMNKALEIIEAHNLFNISPDKIEAIVHPESIVHGIVTYKDGFNFAVLAETDMAIPISYALSGPERSALNRKLDLTKQGKLTFQEPDHKRFPALKLSMAVLNSSAPQTNSIVLNAANEIAVNEFLKSRIGFLKIVEVVESTMESFGSYTDINSLSDIINIDYESRIIAHKIVESKVVAYS.

NADPH contacts are provided by Thr-10, Gly-11, Ser-12, Val-13, Asn-38, and Asn-119. Lys-120 is a binding site for 1-deoxy-D-xylulose 5-phosphate. Glu-121 is a binding site for NADPH. Asp-145 lines the Mn(2+) pocket. The 1-deoxy-D-xylulose 5-phosphate site is built by Ser-146, Glu-147, Ser-170, and His-193. Glu-147 contributes to the Mn(2+) binding site. Gly-199 is an NADPH binding site. The 1-deoxy-D-xylulose 5-phosphate site is built by Ser-206, Asn-211, Lys-212, and Glu-215. Glu-215 contributes to the Mn(2+) binding site.

This sequence belongs to the DXR family. Mg(2+) serves as cofactor. The cofactor is Mn(2+).

The catalysed reaction is 2-C-methyl-D-erythritol 4-phosphate + NADP(+) = 1-deoxy-D-xylulose 5-phosphate + NADPH + H(+). It participates in isoprenoid biosynthesis; isopentenyl diphosphate biosynthesis via DXP pathway; isopentenyl diphosphate from 1-deoxy-D-xylulose 5-phosphate: step 1/6. In terms of biological role, catalyzes the NADPH-dependent rearrangement and reduction of 1-deoxy-D-xylulose-5-phosphate (DXP) to 2-C-methyl-D-erythritol 4-phosphate (MEP). In Wolbachia pipientis wMel, this protein is 1-deoxy-D-xylulose 5-phosphate reductoisomerase.